A 104-amino-acid chain; its full sequence is L-rhamnose mutarotase (104 aa).

Residue Tyr-18 coordinates substrate. His-22 serves as the catalytic Proton donor. Substrate-binding positions include Tyr-41 and 76 to 77 (WW).

The protein belongs to the rhamnose mutarotase family. As to quaternary structure, homodimer.

The protein resides in the cytoplasm. It carries out the reaction alpha-L-rhamnose = beta-L-rhamnose. Its pathway is carbohydrate metabolism; L-rhamnose metabolism. Involved in the anomeric conversion of L-rhamnose. In Lactiplantibacillus plantarum (strain ATCC BAA-793 / NCIMB 8826 / WCFS1) (Lactobacillus plantarum), this protein is L-rhamnose mutarotase.